A 310-amino-acid polypeptide reads, in one-letter code: Cytochrome f (310 aa).

A signal peptide spans 1 to 23 (MRRLLSSTFAALIVGLAVFSAPA). 4 residues coordinate heme: Tyr28, Cys48, Cys51, and His52. A helical transmembrane segment spans residues 277 to 297 (IYGMLAFFAAVALAQIMLVLK).

It belongs to the cytochrome f family. In terms of assembly, the 4 large subunits of the cytochrome b6-f complex are cytochrome b6, subunit IV (17 kDa polypeptide, PetD), cytochrome f and the Rieske protein, while the 4 small subunits are PetG, PetL, PetM and PetN. The complex functions as a dimer. Heme serves as cofactor.

Its subcellular location is the cellular thylakoid membrane. In terms of biological role, component of the cytochrome b6-f complex, which mediates electron transfer between photosystem II (PSII) and photosystem I (PSI), cyclic electron flow around PSI, and state transitions. The polypeptide is Cytochrome f (Synechococcus sp. (strain CC9311)).